A 904-amino-acid polypeptide reads, in one-letter code: Pentatricopeptide repeat-containing protein At4g30825, chloroplastic (904 aa).

The transit peptide at 1-61 directs the protein to the chloroplast; sequence MGSLRFSIPL…SSTRVLDKIR (61 aa). The interval 75 to 94 is disordered; that stretch reads NSASAAPVERSRSSKLSGDQ. PPR repeat units lie at residues 173 to 203, 209 to 243, 244 to 274, 278 to 312, 313 to 347, 348 to 382, 383 to 417, 418 to 452, 487 to 521, 522 to 553, 557 to 591, 592 to 622, 628 to 662, 663 to 697, 698 to 732, 733 to 766, 767 to 801, 802 to 836, 837 to 871, and 872 to 904; these read NFVAYSLILRVLGRREEWDRAEDLIKELCGF, SYQVFNTVIYACTKKGNVKLASKWFHMMLEFGVRP, NVATIGMLMGLYQKNWNVEEAEFAFSHMRKF, CESAYSSMITIYTRLRLYDKAEEVIDLMKQDRVRL, KLENWLVMLNAYSQQGKMELAESILVSMEAAGFSP, NIIAYNTLITGYGKIFKMEAAQGLFHRLCNIGLEP, DETSYRSMIEGWGRADNYEEAKHYYQELKRCGYKP, NSFNLFTLINLQAKYGDRDGAIKTIEDMTGIGCQY, NQTSFSSLVMAYVKHGMVDDCLGLLREKKWRDSAF, ESHLYHLLICSCKESGQLTDAVKIYNHKMESD, NLHITSTMIDIYTVMGEFSEAEKLYLNLKSSGVVL, DRIGFSIVVRMYVKAGSLEEACSVLEIMDEQ, DVYLFRDMLRIYQKCDLQDKLQHLYYRIRKSGIHW, NQEMYNCVINCCARALPLDELSGTFEEMIRYGFTP, NTVTFNVLLDVYGKAKLFKKVNELFLLAKRHGVVD, VISYNTIIAAYGKNKDYTNMSSAIKNMQFDGFSV, SLEAYNTLLDAYGKDKQMEKFRSILKRMKKSTSGP, DHYTYNIMINIYGEQGWIDEVADVLKELKESGLGP, DLCSYNTLIKAYGIGGMVEEAVGLVKEMRGRNIIP, and DKVTYTNLVTALRRNDEFLEAIKWSLWMKQMGI.

This sequence belongs to the PPR family. P subfamily.

The protein localises to the plastid. It is found in the chloroplast. The polypeptide is Pentatricopeptide repeat-containing protein At4g30825, chloroplastic (Arabidopsis thaliana (Mouse-ear cress)).